An 875-amino-acid chain; its full sequence is Neurotrypsin (875 aa).

Residues 1–20 form the signal peptide; the sequence is MTLARFVLALVLGALPEVVG. A glycan (N-linked (GlcNAc...) asparagine) is linked at Asn-26. The segment at 30 to 87 is disordered; the sequence is HHRHRHSPPPGPQYPYYLPTHQRPPRTRPPPPLPRFPRPPRALPAQRPHALQAGHTPR. Over residues 56–71 the composition is skewed to pro residues; it reads TRPPPPLPRFPRPPRA. One can recognise a Kringle domain in the interval 93–165; the sequence is CPAGELWVSV…GKVDWGYCDC (73 aa). Intrachain disulfides connect Cys-93-Cys-165, Cys-109-Cys-149, Cys-138-Cys-163, Cys-195-Cys-259, Cys-208-Cys-269, Cys-239-Cys-249, Cys-305-Cys-369, Cys-318-Cys-379, Cys-349-Cys-359, Cys-412-Cys-475, Cys-425-Cys-485, Cys-455-Cys-465, Cys-525-Cys-589, Cys-538-Cys-599, Cys-569-Cys-579, Cys-619-Cys-750, Cys-661-Cys-677, Cys-765-Cys-831, Cys-794-Cys-808, and Cys-821-Cys-850. 4 SRCR domains span residues 170-271, 280-381, 387-487, and 500-601; these read VRLR…TCSF, IRLV…SCTP, IRLA…ACYP, and VRLM…ICDY. A zymogen activation region region spans residues 619–630; the sequence is CGLRLLHRRQKR. Positions 631–874 constitute a Peptidase S1 domain; the sequence is IIGGKNSLRG…FVPWIKSVTK (244 aa). His-676 functions as the Charge relay system in the catalytic mechanism. N-linked (GlcNAc...) asparagine glycosylation occurs at Asn-683. The active-site Charge relay system is the Asp-726. The active-site Charge relay system is Ser-825.

This sequence belongs to the peptidase S1 family.

It localises to the secreted. Plays a role in neuronal plasticity and the proteolytic action may subserve structural reorganizations associated with learning and memory operations. This Macaca mulatta (Rhesus macaque) protein is Neurotrypsin (PRSS12).